Here is a 114-residue protein sequence, read N- to C-terminus: Ribonuclease P protein component (114 aa).

The protein belongs to the RnpA family. In terms of assembly, consists of a catalytic RNA component (M1 or rnpB) and a protein subunit.

The catalysed reaction is Endonucleolytic cleavage of RNA, removing 5'-extranucleotides from tRNA precursor.. In terms of biological role, RNaseP catalyzes the removal of the 5'-leader sequence from pre-tRNA to produce the mature 5'-terminus. It can also cleave other RNA substrates such as 4.5S RNA. The protein component plays an auxiliary but essential role in vivo by binding to the 5'-leader sequence and broadening the substrate specificity of the ribozyme. The protein is Ribonuclease P protein component of Buchnera aphidicola subsp. Baizongia pistaciae (strain Bp).